Consider the following 536-residue polypeptide: MDITASFLQDLVENKKAVPKIFSKTTLSNETSAKLFPYQKNHVLNLISILLKYFLVLDTSDTGVGKTYMAAAACRELGRKPIIVCPKTLIPNWASVLEFYGVKYYDIVNYETLKNEKTYKDSNFRVRKRCPYIKKVDNDGDYLKPAFEWKVPRNAIIIFDESHRCKDPSTENGKLLMSSKQLIQQNIPVMLLSATICESYSDMKIPFYLMNFIPHTRNFNEFVRTLKTKYPEYRVRNRQLDQAERKIAVENAQTLIIFKEIKEYTSRIRIRDLGNQFPDNQWCAQQFLSDDSDKIAEAYEEIAELMRELEEKKTQCKNHLAKIQKLKQEIELRKIPIFIEQTQLYLEQGKSVIIFVNYINTMNILSAQLNIKCRICGDQTQDQRQESIALFQANIEKIIICQIRAGGVGISLHDLHGGHPRVTLLNFPDSASDLLQALGRAPRSGAKSPVLQRIILVANVEYEKNIMRSINKKLANISAINDGDLEGHKYQVNEGRRRQRRVLNEPVNNPIEEPVNDPVKDPVEDLTDNQPNIVEV.

The Helicase ATP-binding domain maps to 47–214; the sequence is ISILLKYFLV…IPFYLMNFIP (168 aa). 60–67 contacts ATP; it reads SDTGVGKT. Residues 160–163 carry the DEAH box motif; that stretch reads DESH. Positions 288–334 form a coiled coil; sequence LSDDSDKIAEAYEEIAELMRELEEKKTQCKNHLAKIQKLKQEIELRK. Residues 338-486 enclose the Helicase C-terminal domain; that stretch reads FIEQTQLYLE…ISAINDGDLE (149 aa). The interval 502 to 536 is disordered; the sequence is VLNEPVNNPIEEPVNDPVKDPVEDLTDNQPNIVEV.

This sequence belongs to the DEAD box helicase family. DEAH subfamily.

It catalyses the reaction ATP + H2O = ADP + phosphate + H(+). In Acanthamoeba polyphaga (Amoeba), this protein is Putative ATP-dependent RNA helicase L364.